The sequence spans 521 residues: Lipid-translocating exporter-like protein RTA1 (521 aa).

Helical transmembrane passes span Gly-186 to Cys-206, Ala-211 to Leu-231, Leu-249 to Ala-269, Val-292 to Ser-312, Leu-332 to Phe-352, Thr-371 to Val-391, and Glu-418 to Val-438. Residues Thr-493 to Thr-521 form a disordered region.

This sequence belongs to the lipid-translocating exporter (LTE) (TC 9.A.26.1) family.

The protein localises to the membrane. In terms of biological role, lipid-translocating exporter-like protein; part of the gene cluster that mediates the biosynthesis of phomenoic acid, a long chain aliphatic carboxylic acid that does not appear to be essential for pathogenicity but may play a role in allowing to outcompete other fungi in the environmental niche via its antifungal properties. This is Lipid-translocating exporter-like protein RTA1 from Leptosphaeria maculans (strain JN3 / isolate v23.1.3 / race Av1-4-5-6-7-8) (Blackleg fungus).